A 265-amino-acid chain; its full sequence is MKLTAIFPLLFTAVGYCAAQSIADLAAANLSTEDSKSAQLISADSSDDASDSSVESVDAASSDVSGSSVESVDVSGSSLESVDVSGSSLESVDDSSEDSEEEELRILSSKKSGSYYSYGTKKSGSYSGYSTKKSASRRILSSKKSGSYSGYSTKKSGSRRILSSKKSGSYSGSKGSKRRILSSKKSGSYSGSKGSKRRNLSSKKSGSYSGSKGSKRRILSSKKSGSYSGSKGSKRRNLSSKKSGSYSGSKGSKRRILSGGLRGSM.

The first 19 residues, M1–A19, serve as a signal peptide directing secretion. The propeptide at Q20–L107 is acidic. Residues S37–I106 form a disordered region. The span at D51–E90 shows a compositional bias: low complexity. Residues S91 to E103 are compositionally biased toward acidic residues. The stretch at S108–L140 is one R1; atypical repeat. Positions S108 to L257 are 7 X 19 AA repeat of S-S-K-K-S-G-S-Y-S-G-S-K-G-S-K-R-R-[IL]-L. Residue K110 is modified to N6-poly(methylaminopropyl)lysine. K111 carries the post-translational modification N6,N6-dimethyllysine. Positions K122–K133 are enriched in low complexity. Residues K122 to M265 are disordered. Positions R137–L140 are excised as a propeptide. Residues S141 to L162 form an R2; atypical repeat. Low complexity predominate over residues S142–K155. K143 is modified (N6-poly(methylaminopropyl)lysine). K144 is modified (N6,N6-dimethyllysine). K154 is subject to N6-poly(methylaminopropyl)lysine. K155 is subject to N6,N6-dimethyllysine. Positions R159–L162 are excised as a propeptide. A phosphoserine mark is found at S163 and S164. One copy of the R3 repeat lies at S163–L181. Low complexity predominate over residues S164–K174. An N6-poly(methylaminopropyl)lysine modification is found at K165. K166 is subject to N6,N6-dimethyllysine. A phosphoserine mark is found at S167, S169, S171, and S173. N6,N6,N6-trimethyl-5-hydroxylysine is present on K174. S176 is modified (phosphoserine). K177 bears the N6-poly(methylaminopropyl)lysine mark. The propeptide occupies R178–L181. A phosphoserine mark is found at S182 and S183. One copy of the R4 repeat lies at S182–L200. Positions S183–K193 are enriched in low complexity. N6-poly(methylaminopropyl)lysine is present on K184. K185 carries the N6,N6-dimethyllysine modification. Residues S186, S188, S190, and S192 each carry the phosphoserine modification. An N6,N6,N6-trimethyl-5-hydroxylysine modification is found at K193. S195 bears the Phosphoserine mark. K196 carries the N6-poly(methylaminopropyl)lysine modification. A propeptide spanning residues R197–L200 is cleaved from the precursor. Residues S201 and S202 each carry the phosphoserine modification. One copy of the R5 repeat lies at S201–L219. Positions S202–K212 are enriched in low complexity. At K203 the chain carries N6-poly(methylaminopropyl)lysine. K204 bears the N6,N6-dimethyllysine mark. Phosphoserine is present on residues S205, S207, S209, and S211. The residue at position 212 (K212) is an N6,N6,N6-trimethyl-5-hydroxylysine. The residue at position 214 (S214) is a Phosphoserine. K215 carries the post-translational modification N6-poly(methylaminopropyl)lysine. The propeptide occupies R216–L219. Phosphoserine occurs at positions 220 and 221. The stretch at S220–L238 is one R6 repeat. Over residues S221–K231 the composition is skewed to low complexity. K222 carries the post-translational modification N6-poly(methylaminopropyl)lysine. K223 carries the post-translational modification N6,N6-dimethyllysine. Phosphoserine is present on residues S224, S226, S228, and S230. N6,N6,N6-trimethyl-5-hydroxylysine is present on K231. Position 233 is a phosphoserine (S233). K234 is subject to N6-poly(methylaminopropyl)lysine. A propeptide spanning residues R235 to L238 is cleaved from the precursor. 2 positions are modified to phosphoserine: S239 and S240. Residues S239–L257 form an R7 repeat. Positions S240 to K250 are enriched in low complexity. K241 is subject to N6-poly(methylaminopropyl)lysine. An N6,N6-dimethyllysine modification is found at K242. Phosphoserine occurs at positions 243, 245, 247, and 249. K250 is subject to N6,N6,N6-trimethyl-5-hydroxylysine. S252 is subject to Phosphoserine. K253 carries the post-translational modification N6-poly(methylaminopropyl)lysine. The propeptide occupies R254–M265.

In terms of assembly, silaffin-1A peptides form large aggregates via electrostatic interactions due to intermolecular interactions between the negatively charged phosphate groups and the polyamine moieties. In terms of processing, N6-polymethylaminopropylated. Two lysine residues of each peptide bears 6 to 11 repeats of methyl-propylamine, which gives a possible template for nucleation, and may also control the silica colloid size within the silica deposition vesicle (SDV). Post-translationally, phosphorylated. All serine residues of the Silaffin-1A1 peptide are phosphorylated. Only minor amounts of the Silaffin-1A2 peptide are phosphorylated. Phosphorylation is essential for the activity. It may represent a source of anions required for silica formation of diatoms.

Catalyzes the polymerization of silica spheres from a silicilic acid solution. It therefore plays a central role in the formation of silica cell wall of diatoms. The chain is Silaffin-1 (SIL1) from Cylindrotheca fusiformis (Marine diatom).